A 265-amino-acid polypeptide reads, in one-letter code: MPSLPHSHRVMLDSVTHSTFLPNASFCDPLMSWTDLFSNEEYYPAFEHQTACDSYWTSVHPEYWTKRHVWEWLQFCCDQYKLDTNCISFCNFNISGLQLCSMTQEEFVEAAGLCGEYLYFILQNIRTQGYSFFNDAEESKATIKDYADSNCLKTSGIKSQDCHSHSRTSLQSSHLWEFVRDLLLSPEENCGILEWEDREQGIFRVVKSEALAKMWGQRKKNDRMTYEKLSRALRYYYKTGILERVDRRLVYKFGKNAHGWQEDKL.

One can recognise a PNT domain in the interval 43-129 (YPAFEHQTAC…FILQNIRTQG (87 aa)). Residues 173-254 (SHLWEFVRDL…VDRRLVYKFG (82 aa)) constitute a DNA-binding region (ETS).

Belongs to the ETS family. In terms of tissue distribution, expressed exclusively in tissues with a high content of epithelial cells. Highly expressed in salivary gland, mammary gland, kidney and prostate. Weakly expressed in placenta and lung. Isoform 1 and isoform 2 are differentially expressed in different tissues. In the kidney, only isoform 1 was expressed, while prostate expressed both isoforms, with levels of isoform 2 being higher. Expression is up-regulated during keratinocyte differentiation. Several epithelial carcinoma cell lines showed lack of expression.

Its subcellular location is the nucleus. In terms of biological role, transcriptionally activator that may play a role in regulating the later stages of keratinocytes terminal differentiation. Its function is as follows. Isoform 2 binds to DNA sequences containing the consensus nucleotide core sequence GGA[AT]. Transcriptionally activates SPRR2A and the parotid gland-specific PSP promoters. This is ETS-related transcription factor Elf-5 (ELF5) from Homo sapiens (Human).